The following is a 113-amino-acid chain: UPF0342 protein spyM18_0873 (113 aa).

It belongs to the UPF0342 family.

This chain is UPF0342 protein spyM18_0873, found in Streptococcus pyogenes serotype M18 (strain MGAS8232).